We begin with the raw amino-acid sequence, 80 residues long: Venom protein HGE029 (80 aa).

The N-terminal stretch at Met-1–Ala-22 is a signal peptide.

The protein belongs to the non-disulfide-bridged peptide (NDBP) superfamily. Long chain multifunctional peptide (group 2) family. As to expression, expressed by the venom gland.

It localises to the secreted. The protein is Venom protein HGE029 of Hoffmannihadrurus gertschi (Scorpion).